The primary structure comprises 421 residues: Probable mitochondrial chaperone BCS1-A (421 aa).

The Mitochondrial intermembrane segment spans residues 1–10; sequence MNHLKDQSKS. The chain crosses the membrane as a helical span at residues 11-31; that stretch reads IVLGISSGIGIFLISGGINIF. Residues 32-421 lie on the Mitochondrial matrix side of the membrane; it reads KNVGQYILNR…VQSITPFNLN (390 aa). 228–235 serves as a coordination point for ATP; that stretch reads GEPGNGKS.

It belongs to the AAA ATPase family. BCS1 subfamily.

The protein localises to the mitochondrion inner membrane. The catalysed reaction is ATP + H2O = ADP + phosphate + H(+). In terms of biological role, chaperone necessary for the assembly of mitochondrial respiratory chain complex III. The polypeptide is Probable mitochondrial chaperone BCS1-A (bcs1la) (Dictyostelium discoideum (Social amoeba)).